Here is a 310-residue protein sequence, read N- to C-terminus: Transcription initiation factor IIA subunit 1 (310 aa).

3 disordered regions span residues 52–78 (AISN…LSTV), 91–197 (IQLN…NNKD), and 218–261 (VIPQ…DDPD). Low complexity-rich tracts occupy residues 62 to 77 (TTAT…TLST) and 122 to 160 (SNGT…PSSL). Composition is skewed to acidic residues over residues 173 to 183 (TLDESDNDDDN), 225 to 236 (LNDDDDLDDEEI), and 246 to 261 (DSLG…DDPD).

It belongs to the TFIIA subunit 1 family. TFIIA is a heterodimer of the large subunit 1 and a small subunit gamma.

The protein localises to the nucleus. In terms of biological role, TFIIA is a component of the transcription machinery of RNA polymerase II and plays an important role in transcriptional activation. TFIIA in a complex with tbp mediates transcriptional activity. This Dictyostelium discoideum (Social amoeba) protein is Transcription initiation factor IIA subunit 1 (gtf2a1).